Consider the following 338-residue polypeptide: DNA-directed RNA polymerase subunit alpha (338 aa).

Residues M1 to E234 form an alpha N-terminal domain (alpha-NTD) region. The tract at residues F250–F338 is alpha C-terminal domain (alpha-CTD).

It belongs to the RNA polymerase alpha chain family. Homodimer. The RNAP catalytic core consists of 2 alpha, 1 beta, 1 beta' and 1 omega subunit. When a sigma factor is associated with the core the holoenzyme is formed, which can initiate transcription.

It carries out the reaction RNA(n) + a ribonucleoside 5'-triphosphate = RNA(n+1) + diphosphate. Its function is as follows. DNA-dependent RNA polymerase catalyzes the transcription of DNA into RNA using the four ribonucleoside triphosphates as substrates. This chain is DNA-directed RNA polymerase subunit alpha, found in Roseobacter denitrificans (strain ATCC 33942 / OCh 114) (Erythrobacter sp. (strain OCh 114)).